A 104-amino-acid chain; its full sequence is Gastrin (104 aa).

The first 21 residues, Met1–Ala21, serve as a signal peptide directing secretion. A propeptide spanning residues Ser22–Arg58 is cleaved from the precursor. The interval Ser22–Ala70 is disordered. A pyrrolidone carboxylic acid mark is found at Gln59 and Gln76. A Sulfotyrosine modification is found at Tyr87. Position 92 is a phenylalanine amide (Phe92). Ser96 bears the Phosphoserine mark. The propeptide occupies Ser96–Pro104.

Belongs to the gastrin/cholecystokinin family.

The protein resides in the secreted. Its function is as follows. Gastrin stimulates the stomach mucosa to produce and secrete hydrochloric acid and the pancreas to secrete its digestive enzymes. It also stimulates smooth muscle contraction and increases blood circulation and water secretion in the stomach and intestine. The sequence is that of Gastrin (GAST) from Canis lupus familiaris (Dog).